A 482-amino-acid polypeptide reads, in one-letter code: Cardiolipin synthase (482 aa).

The next 2 membrane-spanning stretches (helical) occupy residues 4 to 24 (LAYL…VTVF) and 34 to 54 (WAWL…YLIF). PLD phosphodiesterase domains are found at residues 217 to 244 (LNYR…GDEY) and 395 to 422 (DNGF…DFRS). Residues His222, Lys224, Asp229, His400, Lys402, and Asp407 contribute to the active site.

It belongs to the phospholipase D family. Cardiolipin synthase subfamily.

It localises to the cell membrane. The enzyme catalyses 2 a 1,2-diacyl-sn-glycero-3-phospho-(1'-sn-glycerol) = a cardiolipin + glycerol. Its function is as follows. Catalyzes the reversible phosphatidyl group transfer from one phosphatidylglycerol molecule to another to form cardiolipin (CL) (diphosphatidylglycerol) and glycerol. The chain is Cardiolipin synthase (cls) from Listeria monocytogenes serotype 4a (strain HCC23).